The following is a 1040-amino-acid chain: Multidrug resistance protein MdtB (1040 aa).

Transmembrane regions (helical) follow at residues 16–36 (FIMR…AGII), 347–367 (LMMA…NIPA), 369–389 (IIPG…MVFL), 396–416 (LTLM…IVVI), 440–460 (IGFT…PLLF), 472–492 (FAIT…TLTP), 537–557 (WLTL…WVFI), 863–883 (LGST…VLGI), 888–908 (FIHP…ALLA), 911–931 (IAGS…IGIV), 968–988 (ILMT…STGV), and 998–1018 (IGMV…TPVI).

It belongs to the resistance-nodulation-cell division (RND) (TC 2.A.6) family. MdtB subfamily. As to quaternary structure, part of a tripartite efflux system composed of MdtA, MdtB and MdtC. MdtB forms a heteromultimer with MdtC.

It localises to the cell inner membrane. The MdtABC tripartite complex confers resistance against novobiocin and deoxycholate. The sequence is that of Multidrug resistance protein MdtB from Escherichia coli (strain 55989 / EAEC).